The following is a 230-amino-acid chain: MKIGIVGAMAQEVEILKNLMADRTETRVASAVIFEGKINGKDIALLQSGIGKVAAAIGTTALLQLAKPDCVINTGSAGGVAKGLKVGDIVISDETRYHDADVTAFGYEKGQLPANPAAFLSDKKLADLAQEMAEKQGQSVKRGLICSGDSFINSEDKIAQIQADFPNVMGVEMEATAIAQVCYAFNVPFVVVRAISDGGDGKASMSFEEFLPLAAKQSSALVLGMIDRLS.

The active-site Proton acceptor is Glu-12. Substrate contacts are provided by residues Gly-78, Ile-152, and 173 to 174 (ME). The active-site Proton donor is Asp-197.

It belongs to the PNP/UDP phosphorylase family. MtnN subfamily.

It carries out the reaction S-adenosyl-L-homocysteine + H2O = S-(5-deoxy-D-ribos-5-yl)-L-homocysteine + adenine. It catalyses the reaction S-methyl-5'-thioadenosine + H2O = 5-(methylsulfanyl)-D-ribose + adenine. The catalysed reaction is 5'-deoxyadenosine + H2O = 5-deoxy-D-ribose + adenine. It participates in amino-acid biosynthesis; L-methionine biosynthesis via salvage pathway; S-methyl-5-thio-alpha-D-ribose 1-phosphate from S-methyl-5'-thioadenosine (hydrolase route): step 1/2. In terms of biological role, catalyzes the irreversible cleavage of the glycosidic bond in both 5'-methylthioadenosine (MTA) and S-adenosylhomocysteine (SAH/AdoHcy) to adenine and the corresponding thioribose, 5'-methylthioribose and S-ribosylhomocysteine, respectively. Also cleaves 5'-deoxyadenosine, a toxic by-product of radical S-adenosylmethionine (SAM) enzymes, into 5-deoxyribose and adenine. This is 5'-methylthioadenosine/S-adenosylhomocysteine nucleosidase from Haemophilus influenzae (strain 86-028NP).